Consider the following 567-residue polypeptide: MLVRGYVVSRKLFASILIGALLGIGAPPSAHAGADDVVDSSKSFVMENFSSYHGTKPGYVDSIQKGIQKPKSGTQGNYDDDWKGFYSTDNKYDAAGYSVDNENPLSGKAGGVVKVTYPGLTKVLALKVDNAETIKKELGLSLTEPLMEQVGTEEFIKRFGDGASRVVLSLPFAEGSSSVEYINNWEQAKALSVELEINFETRGKRGQDAMYEYMAQACAGNRVRRSVGSSLSCINLDWDVIRDKTKTKIESLKEHGPIKNKMSESPNKTVSEEKAKQYLEEFHQTALEHPELSELKTVTGTNPVFAGANYAAWAVNVAQVIDSETADNLEKTTAALSILPGIGSVMGIADGAVHHNTEEIVAQSIALSSLMVAQAIPLVGELVDIGFAAYNFVESIINLFQVVHNSYNRPAYSPGHKTQPFLHDGYAVSWNTVEDSIIRTGFQGESGHDIKITAENTPLPIAGVLLPTIPGKLDVNKSKTHISVNGRKIRMRCRAIDGDVTFCRPKSPVYVGNGVHANLHVAFHRSSSEKIHSNEISSDSIGVLGYQKTVDHTKVNSKLSLFFEIKS.

An N-terminal signal peptide occupies residues 1 to 32 (MLVRGYVVSRKLFASILIGALLGIGAPPSAHA). Histidine 53 and tyrosine 97 together coordinate NAD(+). Residue glutamate 180 is part of the active site. Cystine bridges form between cysteine 218–cysteine 233 and cysteine 493–cysteine 503.

Homodimer. In terms of processing, proteolytic activation by host furin cleaves the protein in two parts, Diphtheria toxin fragment A and Diphtheria toxin fragment B; which remain associated via a disulfide bond.

The enzyme catalyses diphthamide-[translation elongation factor 2] + NAD(+) = N-(ADP-D-ribosyl)diphthamide-[translation elongation factor 2] + nicotinamide + H(+). Its activity is regulated as follows. Partially inhibited by 1,8-naphthalimide (NAP). Functionally, diphtheria toxin, produced by a phage infecting Corynebacterium diphtheriae, is a proenzyme that, after activation, catalyzes the covalent attachment of the ADP ribose moiety of NAD to eukaryotic elongation factor 2 (eEF-2). Fragment A is the catalytic portion responsible for enzymatic ADP-ribosylation of elongation factor 2, while fragment B is responsible for binding of toxin to cell receptors and entry of fragment A. The sequence is that of Diphtheria toxin from Corynebacterium diphtheriae.